A 502-amino-acid chain; its full sequence is Protein YdgA (502 aa).

Positions 1-19 (MNKSLVAVGVIVALGVVWT) are cleaved as a signal peptide.

To E.coli YihF and H.influenzae HI_1236. As to quaternary structure, homodimer.

The protein resides in the cell inner membrane. The polypeptide is Protein YdgA (ydgA) (Escherichia coli (strain K12)).